Here is a 173-residue protein sequence, read N- to C-terminus: Photosystem I assembly protein Ycf3 (173 aa).

TPR repeat units follow at residues alanine 35–glutamine 68, glycine 72–glutamine 105, and glycine 120–glycine 153.

This sequence belongs to the Ycf3 family.

It localises to the cellular thylakoid membrane. Functionally, essential for the assembly of the photosystem I (PSI) complex. May act as a chaperone-like factor to guide the assembly of the PSI subunits. The protein is Photosystem I assembly protein Ycf3 of Prochlorococcus marinus (strain NATL1A).